The primary structure comprises 130 residues: Protachykinin-1 (130 aa).

An N-terminal signal peptide occupies residues 1-19 (MKILVAVAVFFLVSTQLFA). Positions 20–56 (EEIDANDDLNYWSDWSDSDQIKEAMPEPFEHLLQRIA) are excised as a propeptide. Methionine amide occurs at positions 68 and 107.

This sequence belongs to the tachykinin family. The substance P form is cleaved at Pro-59 by the prolyl endopeptidase FAP (seprase) activity (in vitro). Substance P is also cleaved and degraded by Angiotensin-converting enzyme (ACE) and neprilysin (MME).

It localises to the secreted. In terms of biological role, tachykinins are active peptides which excite neurons, evoke behavioral responses, are potent vasodilators and secretagogues, and contract (directly or indirectly) many smooth muscles. This is Protachykinin-1 (Tac1) from Mus musculus (Mouse).